We begin with the raw amino-acid sequence, 343 residues long: C-X-C chemokine receptor type 6 (343 aa).

At 1–33 (MAEYDHYEDDGFLNSFNDSSQEEHQDFLQFRKV) the chain is on the extracellular side. Asn-17 is a glycosylation site (N-linked (GlcNAc...) asparagine). Residues 34 to 60 (FLPCMYLVVFVCGLVGNSLVLVISIFY) form a helical membrane-spanning segment. The Cytoplasmic segment spans residues 61–69 (HKLQSLTDV). A helical membrane pass occupies residues 70 to 90 (FLVNLPLADLVFVCTLPFWAY). Residues 91–104 (AGIHEWIFGQVMCK) lie on the Extracellular side of the membrane. A disulfide bridge connects residues Cys-103 and Cys-181. The helical transmembrane segment at 105 to 126 (TLLGVYTINFYTSMLILTCITV) threads the bilayer. Over 127–144 (DRFIVVVKATKAYNQQAK) the chain is Cytoplasmic. A helical transmembrane segment spans residues 145 to 165 (RMTWGKVICLLIWVISLLVSL). The Extracellular segment spans residues 166-188 (PQIIYGNVFNLDKLICGYHDEEI). A helical membrane pass occupies residues 189–216 (STVVLATQMTLGFFLPLLAMIVCYSVII). Residues 217–232 (KTLLHAGGFQKHRSLK) lie on the Cytoplasmic side of the membrane. A helical transmembrane segment spans residues 233–260 (IIFLVMAVFLLTQTPFNLVKLIRSTHWE). Topologically, residues 261-276 (YYAMTSFHYTIIVTEA) are extracellular. Residues 277 to 294 (IAYLRACLNPVLYAFVSL) traverse the membrane as a helical segment. Topologically, residues 295–343 (KFRKNFWKLVKDIGCLPYLGVSHQWKSSEDNSKTFSASHNVEATSMFQL) are cytoplasmic.

It belongs to the G-protein coupled receptor 1 family.

Its subcellular location is the cell membrane. Its function is as follows. Receptor for the C-X-C chemokine CXCL16. Used as a coreceptor by SIVs and by strains of HIV-2 and m-tropic HIV-1. The polypeptide is C-X-C chemokine receptor type 6 (CXCR6) (Macaca mulatta (Rhesus macaque)).